We begin with the raw amino-acid sequence, 175 residues long: MAAVSMSVSLRQALLRQRAVATAAVSVCRVPSRLLNTSTWKLADGQTRDTQLITVDEKLDVTPLTGVPEEHIKTRKVRIFVPARNNMQSGVNNTKKWKMEFDTRERWENPLMGWASTADPLSNMVLTFSAKEDAVAFAEKHGWSYDVEGRKVPKPKSKSYGANFSWNKRTRVSTK.

Residues Met1–Leu42 constitute a mitochondrion transit peptide. The interval Val152–Lys175 is disordered. Ser173 carries the phosphoserine modification.

This sequence belongs to the complex I NDUFS4 subunit family. As to quaternary structure, mammalian complex I is composed of 45 different subunits. This is a component of the iron-sulfur (IP) fragment of the enzyme. Interacts with BCAP31 and TOMM40; the interaction mediates its translocation to the mitochondria; the interaction with BCAP31 is direct.

It is found in the mitochondrion inner membrane. Accessory subunit of the mitochondrial membrane respiratory chain NADH dehydrogenase (Complex I), that is believed not to be involved in catalysis. Complex I functions in the transfer of electrons from NADH to the respiratory chain. The immediate electron acceptor for the enzyme is believed to be ubiquinone. In Rattus norvegicus (Rat), this protein is NADH dehydrogenase [ubiquinone] iron-sulfur protein 4, mitochondrial (Ndufs4).